The primary structure comprises 193 residues: Transcriptional regulator RamR (193 aa).

One can recognise an HTH tetR-type domain in the interval E7–L66. A DNA-binding region (H-T-H motif) is located at residues S29–F48.

As to quaternary structure, homodimer. May bind DNA either as a homodimer or as a pair of homodimers. Various chemicals reduce DNA-binding in vitro, including bile acids, such as cholic and chenodeoxycholic acids, and antimicrobial drugs, such as berberine, crystal violet, dequalinium, ethidium bromide and rhodamine 6G. Binds small regulatory RNA StyR3.

Its function is as follows. Transcriptional regulator. Represses the transcription of the transcriptional activator RamA and, thereby, leads to repression of the expression of the efflux pump subunits AcrA and AcrB, and TolC. Acts by binding directly to the promoter region of the ramA gene. Promoter binding may be inhibited partially by the small regulatory RNA StyR3, perhaps thereby ensuring a basal level of expression of RamA. In Salmonella typhimurium (strain LT2 / SGSC1412 / ATCC 700720), this protein is Transcriptional regulator RamR.